Reading from the N-terminus, the 116-residue chain is Protein Wnt-5b (116 aa).

S1 carries O-palmitoleoyl serine; by PORCN lipidation. N-linked (GlcNAc...) asparagine glycans are attached at residues N69 and N83. A disulfide bridge links C82 with C97.

This sequence belongs to the Wnt family. Palmitoleoylation is required for efficient binding to frizzled receptors. Depalmitoleoylation leads to Wnt signaling pathway inhibition.

Its subcellular location is the secreted. The protein localises to the extracellular space. It localises to the extracellular matrix. Functionally, ligand for members of the frizzled family of seven transmembrane receptors. Probable developmental protein. May be a signaling molecule which affects the development of discrete regions of tissues. Is likely to signal over only few cell diameters. The chain is Protein Wnt-5b (WNT-5B) from Alopias vulpinus (Common thresher shark).